The chain runs to 308 residues: Ribosomal RNA large subunit methyltransferase F (308 aa).

The protein belongs to the methyltransferase superfamily. METTL16/RlmF family.

Its subcellular location is the cytoplasm. It catalyses the reaction adenosine(1618) in 23S rRNA + S-adenosyl-L-methionine = N(6)-methyladenosine(1618) in 23S rRNA + S-adenosyl-L-homocysteine + H(+). Its function is as follows. Specifically methylates the adenine in position 1618 of 23S rRNA. This is Ribosomal RNA large subunit methyltransferase F from Escherichia coli (strain K12 / MC4100 / BW2952).